The sequence spans 254 residues: Probable pectate lyase E (254 aa).

The N-terminal stretch at 1-17 is a signal peptide; it reads MLQSLLLLPLFLTSAFA. The N-linked (GlcNAc...) asparagine glycan is linked to N175. The disordered stretch occupies residues 228–254; that stretch reads NNNGKEPKKKSSGPSKACEYNQPLKKC.

This sequence belongs to the polysaccharide lyase 3 family. The cofactor is Ca(2+).

Its subcellular location is the secreted. The catalysed reaction is Eliminative cleavage of (1-&gt;4)-alpha-D-galacturonan to give oligosaccharides with 4-deoxy-alpha-D-galact-4-enuronosyl groups at their non-reducing ends.. Functionally, pectinolytic enzyme consist of four classes of enzymes: pectin lyase, polygalacturonase, pectin methylesterase and rhamnogalacturonase. Among pectinolytic enzymes, pectin lyase is the most important in depolymerization of pectin, since it cleaves internal glycosidic bonds of highly methylated pectins. Favors pectate, the anion, over pectin, the methyl ester. This is Probable pectate lyase E (plyE) from Aspergillus clavatus (strain ATCC 1007 / CBS 513.65 / DSM 816 / NCTC 3887 / NRRL 1 / QM 1276 / 107).